Here is a 485-residue protein sequence, read N- to C-terminus: Zinc finger protein 639 (485 aa).

A compositionally biased stretch (basic residues) spans 1–14 (MNEYPKKRKRKTLH). Residues 1–20 (MNEYPKKRKRKTLHPSRYSD) are disordered. Serine 60 carries the post-translational modification Phosphoserine. A Glycyl lysine isopeptide (Lys-Gly) (interchain with G-Cter in SUMO2) cross-link involves residue lysine 76. Serine 88 bears the Phosphoserine mark. Residues lysine 177, lysine 181, and lysine 226 each participate in a glycyl lysine isopeptide (Lys-Gly) (interchain with G-Cter in SUMO2) cross-link. 8 consecutive C2H2-type zinc fingers follow at residues 204–227 (YKCE…ILKH), 233–255 (NVCR…AKLH), 260–283 (YICK…ADTH), 289–311 (YWCE…FQEH), 374–397 (FVCQ…AIEH), 403–425 (HVCD…LNSH), 431–454 (YLCQ…DFKH), and 460–482 (HKCS…LPVH). Residues 371–455 (KNFFVCQVCG…LKIHLDFKHS (85 aa)) are interaction with CTNNA2.

The protein belongs to the krueppel C2H2-type zinc-finger protein family. In terms of assembly, interacts with CTNNA2.

It is found in the nucleus. Binds DNA and may function as a transcriptional repressor. This Homo sapiens (Human) protein is Zinc finger protein 639 (ZNF639).